The chain runs to 424 residues: Serine--tRNA ligase (424 aa).

L-serine is bound at residue 233 to 235 (TAE). 264-266 (RRE) provides a ligand contact to ATP. E287 contributes to the L-serine binding site. 351 to 354 (EISS) provides a ligand contact to ATP. Residue S387 coordinates L-serine.

Belongs to the class-II aminoacyl-tRNA synthetase family. Type-1 seryl-tRNA synthetase subfamily. As to quaternary structure, homodimer. The tRNA molecule binds across the dimer.

Its subcellular location is the cytoplasm. It catalyses the reaction tRNA(Ser) + L-serine + ATP = L-seryl-tRNA(Ser) + AMP + diphosphate + H(+). It carries out the reaction tRNA(Sec) + L-serine + ATP = L-seryl-tRNA(Sec) + AMP + diphosphate + H(+). Its pathway is aminoacyl-tRNA biosynthesis; selenocysteinyl-tRNA(Sec) biosynthesis; L-seryl-tRNA(Sec) from L-serine and tRNA(Sec): step 1/1. Functionally, catalyzes the attachment of serine to tRNA(Ser). Is also able to aminoacylate tRNA(Sec) with serine, to form the misacylated tRNA L-seryl-tRNA(Sec), which will be further converted into selenocysteinyl-tRNA(Sec). This Acaryochloris marina (strain MBIC 11017) protein is Serine--tRNA ligase.